The chain runs to 357 residues: Cell division control protein 10 (357 aa).

One can recognise a Septin-type G domain in the interval 34 to 306 (RGFQFNIMVV…ETFRSKQLIA (273 aa)). Residues 44–51 (GRSGLGKS) are G1 motif. Residues 44-51 (GRSGLGKS), Thr78, Gly104, 184-192 (KSDSLTLDE), Gly240, and Arg255 each bind GTP. The tract at residues 101–104 (DTPG) is G3 motif. The tract at residues 183-186 (AKSD) is G4 motif. The interval 310-357 (NASNPNRQSQLQKDQGQTSQQSNQDLKNTSGVPNAPMFQSTTGTAAAR) is disordered.

This sequence belongs to the TRAFAC class TrmE-Era-EngA-EngB-Septin-like GTPase superfamily. Septin GTPase family.

It is found in the bud neck. Its function is as follows. Plays a role in the cell cycle. Involved in the formation of the ring of filaments in the neck region at the mother-bud junction during mitosis. This is Cell division control protein 10 (CDC10) from Candida albicans (strain SC5314 / ATCC MYA-2876) (Yeast).